Reading from the N-terminus, the 1221-residue chain is X-linked retinitis pigmentosa GTPase regulator-interacting protein 1 (1221 aa).

Polar residues-rich tracts occupy residues 1–15 (MIPT…TQPP) and 88–97 (GGTAPSSTSV). Disordered stretches follow at residues 1–22 (MIPT…MTRD), 68–107 (AEAA…SCSS), and 119–196 (SLAS…PEKM). 2 stretches are compositionally biased toward basic and acidic residues: residues 134–147 (HRAE…RDRL) and 155–168 (FKEH…RGEV). A coiled-coil region spans residues 267–533 (LGAAHNALLS…EEQLKDVAYG (267 aa)). A C2 domain is found at 723-843 (QKDEPRSGTW…AQNKSIQGDF (121 aa)). The interval 869-947 (PENFPKPEAQ…YSRRKHGRKT (79 aa)) is disordered. The span at 903–914 (QMVSIDTPTEAG) shows a compositional bias: polar residues. The interaction with RPGR stretch occupies residues 1027–1216 (SEAQTTDSDE…ALQAIYKEMT (190 aa)).

The protein belongs to the RPGRIP1 family. As to quaternary structure, forms homodimers and elongated homopolymers. Interacts with NPHP4. Interacts with NEK4. Interacts with RPGR. Interacts with SPATA7. Interacts with CEP290/NPHP6; mediating the association between RPGR and CEP290/NPHP6. Retina, brain, skeletal muscle and kidney. Colocalizes with RGPR in the outer segment of rod photoreceptors and cone outer segments.

It localises to the cell projection. It is found in the cilium. In terms of biological role, may function as scaffolding protein. Required for normal location of RPGR at the connecting cilium of photoreceptor cells. Required for normal disk morphogenesis and disk organization in the outer segment of photoreceptor cells and for survival of photoreceptor cells. The sequence is that of X-linked retinitis pigmentosa GTPase regulator-interacting protein 1 (RPGRIP1) from Bos taurus (Bovine).